A 208-amino-acid polypeptide reads, in one-letter code: MPPLFISLEGIDGSGKSTQTARLVDWLRVRGRDPLQTREPGGSEGAEEIRRLLVEGDPDRWSAETEILLFTAARRDHLERTIRPALASGRDVVTDRFADSTRVYQGATRGALRGLVDRIHAEAIEAEPDLTLILDMDPELALSRGLARDSGEDRFEDFGLPFQQKLRAGFQALAREYPDRCHIVDASADPDAIAHTIQTIVGQRLAEA.

10–17 (GIDGSGKS) lines the ATP pocket.

This sequence belongs to the thymidylate kinase family.

The catalysed reaction is dTMP + ATP = dTDP + ADP. Its function is as follows. Phosphorylation of dTMP to form dTDP in both de novo and salvage pathways of dTTP synthesis. This is Thymidylate kinase from Jannaschia sp. (strain CCS1).